Consider the following 109-residue polypeptide: Synaptobrevin-1 (109 aa).

The disordered stretch occupies residues 1–26; the sequence is MDAQGDAGAQGGSQGGPRPSNKRLQQ. Residues 1–86 are Cytoplasmic-facing; sequence MDAQGDAGAQ…KRKYWWKNIK (86 aa). Positions 23–83 constitute a v-SNARE coiled-coil homology domain; it reads RLQQTQAQVD…ATLKRKYWWK (61 aa). The chain crosses the membrane as a helical; Anchor for type IV membrane protein span at residues 87–107; the sequence is MMIIMCAIVVILIIIIVLWAG. Residues 108–109 lie on the Extracellular side of the membrane; sequence GK.

It belongs to the synaptobrevin family. As to quaternary structure, part of the SNARE core complex containing ric-4/SNAP25, snb-1/VAMP2 and unc-64/STX1A. This complex binds to cpx-1/CPLX1. Expressed in the nervous system notably the nerve ring, ventral cord and dorsal cord.

Its subcellular location is the cytoplasmic vesicle. The protein resides in the secretory vesicle. It is found in the synaptic vesicle membrane. The protein localises to the cell membrane. It localises to the synapse. Its subcellular location is the synaptosome. Its function is as follows. Involved in the targeting and/or fusion of transport vesicles to their target membrane. Acts in neuronal exocytosis of synaptic transmission. Likely to have a role in cholinergic transmisson. Required for viability, coordinated movement and M3 pharynx motor neuron function. This is Synaptobrevin-1 from Caenorhabditis elegans.